Reading from the N-terminus, the 194-residue chain is Holliday junction branch migration complex subunit RuvA (194 aa).

Positions 1–64 (MIGRITGLLL…EDVHLLFGFM (64 aa)) are domain I. A domain II region spans residues 65-140 (TEQERALFRQ…KIDPVAILSE (76 aa)). Residues 140–143 (EAGA) form a flexible linker region. Residues 144–194 (AASNVDKDILSALLALGYNGREVNRALEQLSEGVTVSDGIMQSLKFLSKVK) form a domain III region.

The protein belongs to the RuvA family. Homotetramer. Forms an RuvA(8)-RuvB(12)-Holliday junction (HJ) complex. HJ DNA is sandwiched between 2 RuvA tetramers; dsDNA enters through RuvA and exits via RuvB. An RuvB hexamer assembles on each DNA strand where it exits the tetramer. Each RuvB hexamer is contacted by two RuvA subunits (via domain III) on 2 adjacent RuvB subunits; this complex drives branch migration. In the full resolvosome a probable DNA-RuvA(4)-RuvB(12)-RuvC(2) complex forms which resolves the HJ.

Its subcellular location is the cytoplasm. In terms of biological role, the RuvA-RuvB-RuvC complex processes Holliday junction (HJ) DNA during genetic recombination and DNA repair, while the RuvA-RuvB complex plays an important role in the rescue of blocked DNA replication forks via replication fork reversal (RFR). RuvA specifically binds to HJ cruciform DNA, conferring on it an open structure. The RuvB hexamer acts as an ATP-dependent pump, pulling dsDNA into and through the RuvAB complex. HJ branch migration allows RuvC to scan DNA until it finds its consensus sequence, where it cleaves and resolves the cruciform DNA. The protein is Holliday junction branch migration complex subunit RuvA of Nitrosomonas eutropha (strain DSM 101675 / C91 / Nm57).